The sequence spans 142 residues: Putative transcriptional regulatory protein Mevan_1098 (142 aa).

Belongs to the Tfx family.

In terms of biological role, putative transcriptional regulator. The protein is Putative transcriptional regulatory protein Mevan_1098 of Methanococcus vannielii (strain ATCC 35089 / DSM 1224 / JCM 13029 / OCM 148 / SB).